A 346-amino-acid polypeptide reads, in one-letter code: MSFRTIEWRDNKVIMIDQTRLPAEEVYNEYTDFQGVAQAIRGMVVRGAPAIGIAAAMGVALGAREIIADSFDTFYRQLENVCEVIGRTRPTAVNLFWGLERMKRVALQHKELNLNSIRELLKAEAISIETEDLAICKEIGRHGAALVKEGASILTHCNAGGLATAGYGTALGVIRGAHEAGKGIRVFADETRPWLQGARLTAWELMKDSIPVTLISDNMAGWLMKTGQIDFCVVGADRIAANGDTANKIGTYSVAVLAKENRIPFYVAAPISTLDLKLANGDLIPIEERASEEVTQIKGIQIAPEGVKVRNPAFDVTPARYITGIITEKGVVRGDYERELKALVGQ.

Substrate-binding positions include 46 to 48 (RGA), Arg-89, and Gln-196. Asp-237 acts as the Proton donor in catalysis. 247–248 (NK) is a substrate binding site.

This sequence belongs to the eIF-2B alpha/beta/delta subunits family. MtnA subfamily.

The enzyme catalyses 5-(methylsulfanyl)-alpha-D-ribose 1-phosphate = 5-(methylsulfanyl)-D-ribulose 1-phosphate. It participates in amino-acid biosynthesis; L-methionine biosynthesis via salvage pathway; L-methionine from S-methyl-5-thio-alpha-D-ribose 1-phosphate: step 1/6. Functionally, catalyzes the interconversion of methylthioribose-1-phosphate (MTR-1-P) into methylthioribulose-1-phosphate (MTRu-1-P). This is Methylthioribose-1-phosphate isomerase from Citrifermentans bemidjiense (strain ATCC BAA-1014 / DSM 16622 / JCM 12645 / Bem) (Geobacter bemidjiensis).